The primary structure comprises 277 residues: RNA-binding protein pno-1 (277 aa).

2 disordered regions span residues 1–52 (MATS…KLVK) and 72–100 (DEDA…GESR). Residues 8–27 (FDDELPMEEGMPELLDDEDV) show a composition bias toward acidic residues. Residues 30-40 (TLPSLLEQNLD) show a composition bias toward polar residues. Residues 72-81 (DEDATADTAD) are compositionally biased toward acidic residues. The 53-residue stretch at 198–250 (GDHVSRAIGRIAGKDGRTKLVIENTTKTRIVVANTKIHILGAYQNLKLARNAV) folds into the KH domain.

It belongs to the PNO1 family. In terms of assembly, part of the small subunit (SSU) processome, composed of more than 70 proteins and the RNA chaperone small nucleolar RNA (snoRNA) U3.

It is found in the nucleus. The protein localises to the nucleolus. Its function is as follows. Part of the small subunit (SSU) processome, first precursor of the small eukaryotic ribosomal subunit. During the assembly of the SSU processome in the nucleolus, many ribosome biogenesis factors, an RNA chaperone and ribosomal proteins associate with the nascent pre-rRNA and work in concert to generate RNA folding, modifications, rearrangements and cleavage as well as targeted degradation of pre-ribosomal RNA by the RNA exosome. Positively regulates dimethylation of two adjacent adenosines in the loop of a conserved hairpin near the 3'-end of 18S rRNA. The chain is RNA-binding protein pno-1 from Caenorhabditis elegans.